Consider the following 412-residue polypeptide: Zinc finger protein 260 (412 aa).

13 C2H2-type zinc fingers span residues Tyr-27–His-49, His-55–His-77, Tyr-83–His-105, Tyr-136–His-158, Phe-164–His-186, Phe-192–His-214, Tyr-220–His-242, Tyr-248–His-270, Tyr-276–His-298, Tyr-304–His-326, Tyr-332–His-354, Tyr-360–His-382, and Tyr-388–His-412.

It belongs to the krueppel C2H2-type zinc-finger protein family. As to quaternary structure, binds DNA. Interacts with GATA4.

The protein localises to the nucleus. In terms of biological role, transcription factor that acts as a cardiac regulator and an effector of alpha1-adrenergic signaling. Binds to PE response elements (PERE) present in the promoter of genes such as ANF/NPPA and acts as a direct transcriptional activator of NPPA. Also acts as a cofactor with GATA4, a key cardiac regulator. This chain is Zinc finger protein 260 (ZNF260), found in Homo sapiens (Human).